The sequence spans 862 residues: Leucine--tRNA ligase (862 aa).

The short motif at 51–61 (PYPSGSLHMGH) is the 'HIGH' region element. The short motif at 624–628 (KMSKS) is the 'KMSKS' region element. An ATP-binding site is contributed by Lys-627.

Belongs to the class-I aminoacyl-tRNA synthetase family.

The protein localises to the cytoplasm. The catalysed reaction is tRNA(Leu) + L-leucine + ATP = L-leucyl-tRNA(Leu) + AMP + diphosphate. The sequence is that of Leucine--tRNA ligase from Prochlorococcus marinus (strain NATL1A).